The sequence spans 301 residues: Ribonuclease Z (301 aa).

7 residues coordinate Zn(2+): His61, His63, Asp65, His66, His140, Asp211, and His269. The Proton acceptor role is filled by Asp65.

It belongs to the RNase Z family. In terms of assembly, homodimer. It depends on Zn(2+) as a cofactor.

The catalysed reaction is Endonucleolytic cleavage of RNA, removing extra 3' nucleotides from tRNA precursor, generating 3' termini of tRNAs. A 3'-hydroxy group is left at the tRNA terminus and a 5'-phosphoryl group is left at the trailer molecule.. Functionally, zinc phosphodiesterase, which displays some tRNA 3'-processing endonuclease activity. Probably involved in tRNA maturation, by removing a 3'-trailer from precursor tRNA. This chain is Ribonuclease Z, found in Bradyrhizobium diazoefficiens (strain JCM 10833 / BCRC 13528 / IAM 13628 / NBRC 14792 / USDA 110).